Here is a 258-residue protein sequence, read N- to C-terminus: Hydroxyacylglutathione hydrolase (258 aa).

Residues histidine 52, histidine 54, aspartate 56, histidine 57, histidine 109, aspartate 126, and histidine 164 each coordinate Zn(2+).

The protein belongs to the metallo-beta-lactamase superfamily. Glyoxalase II family. As to quaternary structure, monomer. Zn(2+) serves as cofactor.

The enzyme catalyses an S-(2-hydroxyacyl)glutathione + H2O = a 2-hydroxy carboxylate + glutathione + H(+). It functions in the pathway secondary metabolite metabolism; methylglyoxal degradation; (R)-lactate from methylglyoxal: step 2/2. In terms of biological role, thiolesterase that catalyzes the hydrolysis of S-D-lactoyl-glutathione to form glutathione and D-lactic acid. The sequence is that of Hydroxyacylglutathione hydrolase from Xylella fastidiosa (strain M12).